A 131-amino-acid chain; its full sequence is Small ribosomal subunit protein bS6 (131 aa).

Positions 94–131 are disordered; that stretch reads DAVTEESQLAKNADEKRARKATTRRPDSNDDNDNHSDD. The span at 117 to 131 shows a compositional bias: basic and acidic residues; it reads RRPDSNDDNDNHSDD.

Belongs to the bacterial ribosomal protein bS6 family.

Its function is as follows. Binds together with bS18 to 16S ribosomal RNA. The protein is Small ribosomal subunit protein bS6 of Psychrobacter cryohalolentis (strain ATCC BAA-1226 / DSM 17306 / VKM B-2378 / K5).